We begin with the raw amino-acid sequence, 227 residues long: Cytochrome c oxidase subunit 2 (227 aa).

The Mitochondrial intermembrane segment spans residues methionine 1–serine 14. Residues proline 15 to threonine 45 traverse the membrane as a helical segment. Topologically, residues leucine 46–glutamine 59 are mitochondrial matrix. The helical transmembrane segment at glutamate 60–threonine 87 threads the bilayer. Topologically, residues aspartate 88–leucine 227 are mitochondrial intermembrane. Positions 161, 196, 198, 200, 204, and 207 each coordinate Cu cation. Glutamate 198 provides a ligand contact to Mg(2+).

It belongs to the cytochrome c oxidase subunit 2 family. Component of the cytochrome c oxidase (complex IV, CIV), a multisubunit enzyme composed of 14 subunits. The complex is composed of a catalytic core of 3 subunits MT-CO1, MT-CO2 and MT-CO3, encoded in the mitochondrial DNA, and 11 supernumerary subunits COX4I, COX5A, COX5B, COX6A, COX6B, COX6C, COX7A, COX7B, COX7C, COX8 and NDUFA4, which are encoded in the nuclear genome. The complex exists as a monomer or a dimer and forms supercomplexes (SCs) in the inner mitochondrial membrane with NADH-ubiquinone oxidoreductase (complex I, CI) and ubiquinol-cytochrome c oxidoreductase (cytochrome b-c1 complex, complex III, CIII), resulting in different assemblies (supercomplex SCI(1)III(2)IV(1) and megacomplex MCI(2)III(2)IV(2)). Found in a complex with TMEM177, COA6, COX18, COX20, SCO1 and SCO2. Interacts with TMEM177 in a COX20-dependent manner. Interacts with COX20. Interacts with COX16. It depends on Cu cation as a cofactor.

Its subcellular location is the mitochondrion inner membrane. It carries out the reaction 4 Fe(II)-[cytochrome c] + O2 + 8 H(+)(in) = 4 Fe(III)-[cytochrome c] + 2 H2O + 4 H(+)(out). Component of the cytochrome c oxidase, the last enzyme in the mitochondrial electron transport chain which drives oxidative phosphorylation. The respiratory chain contains 3 multisubunit complexes succinate dehydrogenase (complex II, CII), ubiquinol-cytochrome c oxidoreductase (cytochrome b-c1 complex, complex III, CIII) and cytochrome c oxidase (complex IV, CIV), that cooperate to transfer electrons derived from NADH and succinate to molecular oxygen, creating an electrochemical gradient over the inner membrane that drives transmembrane transport and the ATP synthase. Cytochrome c oxidase is the component of the respiratory chain that catalyzes the reduction of oxygen to water. Electrons originating from reduced cytochrome c in the intermembrane space (IMS) are transferred via the dinuclear copper A center (CU(A)) of subunit 2 and heme A of subunit 1 to the active site in subunit 1, a binuclear center (BNC) formed by heme A3 and copper B (CU(B)). The BNC reduces molecular oxygen to 2 water molecules using 4 electrons from cytochrome c in the IMS and 4 protons from the mitochondrial matrix. This chain is Cytochrome c oxidase subunit 2 (MT-CO2), found in Cercocebus galeritus (Tana river mangabey).